The chain runs to 115 residues: Large ribosomal subunit protein bL20c (115 aa).

The protein belongs to the bacterial ribosomal protein bL20 family.

The protein resides in the plastid. Its subcellular location is the chloroplast. Its function is as follows. Binds directly to 23S ribosomal RNA and is necessary for the in vitro assembly process of the 50S ribosomal subunit. It is not involved in the protein synthesizing functions of that subunit. This is Large ribosomal subunit protein bL20c from Physcomitrium patens (Spreading-leaved earth moss).